The following is a 104-amino-acid chain: UPF0145 protein TM1040_1243 (104 aa).

The protein belongs to the UPF0145 family.

The chain is UPF0145 protein TM1040_1243 from Ruegeria sp. (strain TM1040) (Silicibacter sp.).